The following is a 295-amino-acid chain: Fructose-bisphosphate aldolase class 1 (295 aa).

E176 acts as the Proton acceptor in catalysis. The active-site Schiff-base intermediate with dihydroxyacetone-P is the K213.

Belongs to the class I fructose-bisphosphate aldolase family.

The enzyme catalyses beta-D-fructose 1,6-bisphosphate = D-glyceraldehyde 3-phosphate + dihydroxyacetone phosphate. Its pathway is carbohydrate degradation; glycolysis; D-glyceraldehyde 3-phosphate and glycerone phosphate from D-glucose: step 4/4. This Clostridium beijerinckii (strain ATCC 51743 / NCIMB 8052) (Clostridium acetobutylicum) protein is Fructose-bisphosphate aldolase class 1.